Here is a 355-residue protein sequence, read N- to C-terminus: Probable butyrate kinase (355 aa).

Belongs to the acetokinase family.

The protein resides in the cytoplasm. The enzyme catalyses butanoate + ATP = butanoyl phosphate + ADP. In Listeria innocua serovar 6a (strain ATCC BAA-680 / CLIP 11262), this protein is Probable butyrate kinase.